A 450-amino-acid chain; its full sequence is Ornithine decarboxylase (450 aa).

An N6-(pyridoxal phosphate)lysine modification is found at Lys59. Residues Ser190, Gly227, and 264–267 (EPGR) contribute to the pyridoxal 5'-phosphate site. Ser293 is subject to Phosphoserine; by CK2. 321–322 (YD) is a substrate binding site. The active-site Proton donor; shared with dimeric partner is Cys350. Asp351 provides a ligand contact to substrate. Tyr379 lines the pyridoxal 5'-phosphate pocket.

Belongs to the Orn/Lys/Arg decarboxylase class-II family. In terms of assembly, homodimer. Only the dimer is catalytically active, as the active sites are constructed of residues from both monomers. Pyridoxal 5'-phosphate is required as a cofactor.

The enzyme catalyses L-ornithine + H(+) = putrescine + CO2. It participates in amine and polyamine biosynthesis; putrescine biosynthesis via L-ornithine pathway; putrescine from L-ornithine: step 1/1. Inhibited by antizymes (AZs) in response to polyamine levels. AZs inhibit the assembly of the functional homodimer by binding to ODC monomers and targeting them for ubiquitin-independent proteolytic destruction by the 26S proteasome. Its function is as follows. Catalyzes the first and rate-limiting step of polyamine biosynthesis that converts ornithine into putrescine, which is the precursor for the polyamines, spermidine and spermine. Polyamines are essential for cell proliferation and are implicated in cellular processes, ranging from DNA replication to apoptosis. This Gallus gallus (Chicken) protein is Ornithine decarboxylase (ODC1).